A 117-amino-acid polypeptide reads, in one-letter code: Replication initiation control protein YabA (117 aa).

Histidine 87, cysteine 89, cysteine 103, and cysteine 106 together coordinate Zn(2+).

The protein belongs to the YabA family. As to quaternary structure, homotetramer. Interacts with both DnaA and DnaN, acting as a bridge between these two proteins. Requires Zn(2+) as cofactor.

It localises to the cytoplasm. It is found in the nucleoid. In terms of biological role, involved in control of chromosome replication initiation. Inhibits the cooperative binding of DnaA to the oriC region, thus negatively regulating initiation of chromosome replication. Inhibits the ability of DnaA-ATP to form a helix on DNA; does not disassemble preformed DnaA-DNA helices. Decreases the residence time of DnaA on the chromosome at its binding sites (oriC, replication forks and promoter-binding sites). Tethers DnaA to the replication machinery via the DNA polymerase beta sliding clamp subunit (dnaN). Associates with oriC and other DnaA targets on the chromosome in a DnaA-dependent manner. This is Replication initiation control protein YabA from Latilactobacillus sakei subsp. sakei (strain 23K) (Lactobacillus sakei subsp. sakei).